The chain runs to 587 residues: 2-succinyl-5-enolpyruvyl-6-hydroxy-3-cyclohexene-1-carboxylate synthase (587 aa).

It belongs to the TPP enzyme family. MenD subfamily. In terms of assembly, homodimer. The cofactor is Mg(2+). Requires Mn(2+) as cofactor. Thiamine diphosphate is required as a cofactor.

The catalysed reaction is isochorismate + 2-oxoglutarate + H(+) = 5-enolpyruvoyl-6-hydroxy-2-succinyl-cyclohex-3-ene-1-carboxylate + CO2. The protein operates within quinol/quinone metabolism; 1,4-dihydroxy-2-naphthoate biosynthesis; 1,4-dihydroxy-2-naphthoate from chorismate: step 2/7. It participates in quinol/quinone metabolism; menaquinone biosynthesis. In terms of biological role, catalyzes the thiamine diphosphate-dependent decarboxylation of 2-oxoglutarate and the subsequent addition of the resulting succinic semialdehyde-thiamine pyrophosphate anion to isochorismate to yield 2-succinyl-5-enolpyruvyl-6-hydroxy-3-cyclohexene-1-carboxylate (SEPHCHC). This chain is 2-succinyl-5-enolpyruvyl-6-hydroxy-3-cyclohexene-1-carboxylate synthase, found in Chloroflexus aurantiacus (strain ATCC 29366 / DSM 635 / J-10-fl).